We begin with the raw amino-acid sequence, 144 residues long: Large ribosomal subunit protein uL24 (144 aa).

The tract at residues 102-144 (NIVVEKPEPEPEPRKEETAEAQEAKEEAVAEEKTEVDDNDKQN) is disordered. Residues 103-134 (IVVEKPEPEPEPRKEETAEAQEAKEEAVAEEK) show a composition bias toward basic and acidic residues. Positions 135 to 144 (TEVDDNDKQN) are enriched in acidic residues.

Belongs to the universal ribosomal protein uL24 family. As to quaternary structure, part of the 50S ribosomal subunit.

In terms of biological role, one of two assembly initiator proteins, it binds directly to the 5'-end of the 23S rRNA, where it nucleates assembly of the 50S subunit. Its function is as follows. Located at the polypeptide exit tunnel on the outside of the subunit. The sequence is that of Large ribosomal subunit protein uL24 (rpl24) from Thermoplasma acidophilum (strain ATCC 25905 / DSM 1728 / JCM 9062 / NBRC 15155 / AMRC-C165).